The chain runs to 436 residues: Mannan endo-1,4-beta-mannosidase F (436 aa).

An N-terminal signal peptide occupies residues 1–18 (MRSLSSVALLSAIGAASA). Positions 19–54 (QAGPWGQCAGISHTGPTTCESGWSCVYLNDWYSQCQ) constitute a CBM1 domain. A disordered region spans residues 60 to 88 (SSSTTVSSTKQPSSTVAAPSSTTSAHTLP). Residues 79–113 (SSTTSAHTLPTGSGSFAKTDGLKFNIDGKTKYFAG) form a ser-rich linker region. Residues 114–436 (TNAYWLPFLT…CAVIDHISQI (323 aa)) form a catalytic region. Residues Trp-146 and Asn-260 each contribute to the substrate site. Residue Glu-261 is the Proton donor of the active site. Tyr-336 is a binding site for substrate. The active-site Nucleophile is Glu-370. Trp-400 serves as a coordination point for substrate.

Belongs to the glycosyl hydrolase 5 (cellulase A) family.

It is found in the secreted. The enzyme catalyses Random hydrolysis of (1-&gt;4)-beta-D-mannosidic linkages in mannans, galactomannans and glucomannans.. Endo-1,4-mannanase, a crucial enzyme for depolymerization of seed galactomannans and wood galactoglucomannans. This Aspergillus clavatus (strain ATCC 1007 / CBS 513.65 / DSM 816 / NCTC 3887 / NRRL 1 / QM 1276 / 107) protein is Mannan endo-1,4-beta-mannosidase F (manF).